The following is a 145-amino-acid chain: Aspartate 1-decarboxylase (145 aa).

The active-site Schiff-base intermediate with substrate; via pyruvic acid is Ser25. Ser25 carries the post-translational modification Pyruvic acid (Ser). Residue Thr57 participates in substrate binding. Tyr58 acts as the Proton donor in catalysis. 73–75 (GAA) serves as a coordination point for substrate.

Belongs to the PanD family. In terms of assembly, heterooctamer of four alpha and four beta subunits. It depends on pyruvate as a cofactor. Post-translationally, is synthesized initially as an inactive proenzyme, which is activated by self-cleavage at a specific serine bond to produce a beta-subunit with a hydroxyl group at its C-terminus and an alpha-subunit with a pyruvoyl group at its N-terminus.

It localises to the cytoplasm. It carries out the reaction L-aspartate + H(+) = beta-alanine + CO2. It participates in cofactor biosynthesis; (R)-pantothenate biosynthesis; beta-alanine from L-aspartate: step 1/1. Its function is as follows. Catalyzes the pyruvoyl-dependent decarboxylation of aspartate to produce beta-alanine. The protein is Aspartate 1-decarboxylase of Micrococcus luteus (strain ATCC 4698 / DSM 20030 / JCM 1464 / CCM 169 / CCUG 5858 / IAM 1056 / NBRC 3333 / NCIMB 9278 / NCTC 2665 / VKM Ac-2230) (Micrococcus lysodeikticus).